A 1041-amino-acid polypeptide reads, in one-letter code: Toll-like receptor 8 (1041 aa).

The signal sequence occupies residues 1–26 (MENMFLQSSMLTCIFLLISGSCELCA). Residues 27-827 (EENFSRSYPC…ELTTCVSDVT (801 aa)) are Extracellular-facing. N-linked (GlcNAc...) asparagine glycans are attached at residues N29, N42, N80, N88, and N115. C36 and C49 are oxidised to a cystine. LRR repeat units follow at residues 126 to 147 (NLRE…LPES), 148 to 168 (LTEL…GISR), 171 to 193 (NLKN…TNIE), 202 to 223 (NLEL…LPSS), 224 to 244 (LRKL…DFKG), and 247 to 268 (NLTL…FPCV). N160 carries N-linked (GlcNAc...) asparagine glycosylation. The cysteines at positions 181 and 187 are disulfide-linked. An N-linked (GlcNAc...) asparagine glycan is attached at N247. Cystine bridges form between C257–C270 and C260–C267. N285 and N293 each carry an N-linked (GlcNAc...) asparagine glycan. LRR repeat units lie at residues 288-309 (QLRY…WFKN), 312-334 (HLKV…AFLT), and 338-360 (RLEI…INIS). N-linked (GlcNAc...) asparagine glycosylation is found at N358 and N362. LRR repeat units lie at residues 368–389 (SLRA…DFQP), 395–416 (NLST…LFQN), and 419–440 (NLEI…TRQS). N-linked (GlcNAc...) asparagine glycosylation is found at N395 and N416. The N-linked (GlcNAc...) asparagine glycan is linked to N443. A disulfide bond links C479 and C509. 4 LRR repeats span residues 482 to 503 (YGKA…QFEN), 506 to 527 (DIAC…TEFS), 531 to 551 (HVKY…SALT), and 555 to 577 (DLEV…THHL). N-linked (GlcNAc...) asparagine glycosylation is found at N511 and N546. N582 and N590 each carry an N-linked (GlcNAc...) asparagine glycan. LRR repeat units follow at residues 585-606 (NLKV…YNLE), 609-630 (SLVE…DDNR), 640-661 (NLTR…AFLN), 665-685 (SLTE…TLLQ), 689-710 (RLEL…LSDF), 713-734 (SLRT…FLSE), and 737-758 (SLKH…ALET). N-linked (GlcNAc...) asparagine glycosylation is found at N640 and N680. N752 carries an N-linked (GlcNAc...) asparagine glycan. The LRRCT domain occupies 772 to 824 (NPFECTCDIGDFRRWMDEHLNVKIPRLVDVICASPGDQRGKSIVSLELTTCVS). C776 and C803 form a disulfide bridge. The chain crosses the membrane as a helical span at residues 828 to 848 (AVILFFFTFFITTMVMLAALA). Residues 849 to 1041 (HHLFYWDVWF…NMYVDSIKQY (193 aa)) are Cytoplasmic-facing. A TIR domain is found at 878-1022 (TFYDAYISYD…LFWQTLRNVV (145 aa)).

This sequence belongs to the Toll-like receptor family. Homodimer. Interacts with MYD88 via their respective TIR domains. Interacts with UNC93B1. Interacts with BTK. Interacts with SMPDL3B. Post-translationally, ubiquitinated by RNF216; leading to degradation by the proteasome. Proteolytic processing occurs in monocytes and monocyte-derived macrophages by both furin-like proprotein convertase and cathepsins. The cleavage is necessary for dimer formation and subsequent activation. As to expression, expressed in myeloid dendritic cells, monocytes, and monocyte-derived dendritic cells.

The protein localises to the endosome membrane. With respect to regulation, activated by RNAs having enough uridines. Its function is as follows. Endosomal receptor that plays a key role in innate and adaptive immunity. Controls host immune response against pathogens through recognition of RNA degradation products specific to microorganisms that are initially processed by RNASET2. Recognizes GU-rich single-stranded RNA (GU-rich RNA) derived from SARS-CoV-2, SARS-CoV-1 and HIV-1 viruses. Upon binding to agonists, undergoes dimerization that brings TIR domains from the two molecules into direct contact, leading to the recruitment of TIR-containing downstream adapter MYD88 through homotypic interaction. In turn, the Myddosome signaling complex is formed involving IRAK4, IRAK1, TRAF6, TRAF3 leading to activation of downstream transcription factors NF-kappa-B and IRF7 to induce pro-inflammatory cytokines and interferons, respectively. This is Toll-like receptor 8 from Homo sapiens (Human).